The sequence spans 406 residues: Beta-galactoside alpha-2,6-sialyltransferase 1 (406 aa).

Residues methionine 1 to lysine 9 are Cytoplasmic-facing. The helical; Signal-anchor for type II membrane protein transmembrane segment at phenylalanine 10 to tryptophan 26 threads the bilayer. At lysine 27–cysteine 406 the chain is on the lumenal side. Disulfide bonds link cysteine 142–cysteine 406, cysteine 184–cysteine 335, and cysteine 353–cysteine 364. N-linked (GlcNAc...) asparagine glycans are attached at residues asparagine 149 and asparagine 161. Substrate is bound by residues serine 189, asparagine 212, asparagine 233, serine 322 to glycine 324, cysteine 353, tyrosine 354, threonine 365, tyrosine 369, histidine 370, and lysine 376. Residue tyrosine 369 is modified to Phosphotyrosine.

The protein belongs to the glycosyltransferase 29 family. As to quaternary structure, monomer and homodimer. In terms of processing, N-glycosylated.

The protein localises to the golgi apparatus. The protein resides in the golgi stack membrane. It localises to the secreted. It catalyses the reaction a beta-D-galactoside + CMP-N-acetyl-beta-neuraminate = an N-acetyl-alpha-neuraminyl-(2-&gt;6)-beta-D-galactosyl derivative + CMP + H(+). The protein operates within protein modification; protein glycosylation. Its activity is regulated as follows. Inhibited by CTP. In terms of biological role, transfers sialic acid from CMP-sialic acid to galactose-containing acceptor substrates. In B lymphocytes, generates neuraminidase-sensitive lymphocyte cell-surface differentiation antigens, such as CDw75, HB-6 and CD76. In Homo sapiens (Human), this protein is Beta-galactoside alpha-2,6-sialyltransferase 1 (ST6GAL1).